Consider the following 418-residue polypeptide: Tryptophan synthase beta chain (418 aa).

Positions Met-1–Asp-12 are enriched in polar residues. Positions Met-1 to Arg-21 are disordered. Lys-111 carries the N6-(pyridoxal phosphate)lysine modification.

The protein belongs to the TrpB family. In terms of assembly, tetramer of two alpha and two beta chains. Pyridoxal 5'-phosphate is required as a cofactor.

The enzyme catalyses (1S,2R)-1-C-(indol-3-yl)glycerol 3-phosphate + L-serine = D-glyceraldehyde 3-phosphate + L-tryptophan + H2O. It functions in the pathway amino-acid biosynthesis; L-tryptophan biosynthesis; L-tryptophan from chorismate: step 5/5. Functionally, the beta subunit is responsible for the synthesis of L-tryptophan from indole and L-serine. This is Tryptophan synthase beta chain from Synechococcus sp. (strain CC9311).